Consider the following 49-residue polypeptide: Large ribosomal subunit protein bL33 (49 aa).

The protein belongs to the bacterial ribosomal protein bL33 family.

The sequence is that of Large ribosomal subunit protein bL33 from Pseudothermotoga lettingae (strain ATCC BAA-301 / DSM 14385 / NBRC 107922 / TMO) (Thermotoga lettingae).